Here is a 706-residue protein sequence, read N- to C-terminus: Centrosomal protein kizuna (706 aa).

Residues Gln63–Lys113 are a coiled coil. Basic residues predominate over residues Thr105–Ser116. Disordered regions lie at residues Thr105–His184, Val215–Gly347, Glu571–Val603, Ser620–Pro665, and Glu677–Asp706. A compositionally biased stretch (basic and acidic residues) spans Gly118–Ser127. 2 stretches are compositionally biased toward polar residues: residues Arg128 to Ala156 and His164 to Gly180. Positions Val215–Val251 are enriched in basic and acidic residues. Residues Thr272–Ser283 show a composition bias toward low complexity. The segment covering Gly293–Asp304 has biased composition (acidic residues). Residues Pro308–Ile320 show a composition bias toward polar residues. The segment covering Glu586–Ala598 has biased composition (acidic residues). Basic and acidic residues predominate over residues Pro638–Val648.

Belongs to the kizuna family.

The protein resides in the cytoplasm. Its subcellular location is the cytoskeleton. It is found in the microtubule organizing center. It localises to the centrosome. The protein localises to the cilium basal body. Its function is as follows. Centrosomal protein required for establishing a robust mitotic centrosome architecture that can endure the forces that converge on the centrosomes during spindle formation. Required for stabilizing the expanded pericentriolar material around the centriole. This is Centrosomal protein kizuna (kiz) from Danio rerio (Zebrafish).